The sequence spans 202 residues: Translation initiation factor IF-3 (202 aa).

The disordered stretch occupies residues Lys-172–His-202.

The protein belongs to the IF-3 family. Monomer.

It localises to the cytoplasm. In terms of biological role, IF-3 binds to the 30S ribosomal subunit and shifts the equilibrium between 70S ribosomes and their 50S and 30S subunits in favor of the free subunits, thus enhancing the availability of 30S subunits on which protein synthesis initiation begins. The sequence is that of Translation initiation factor IF-3 from Mycobacterium leprae (strain TN).